Consider the following 229-residue polypeptide: UPF0758 protein MM_2791 (229 aa).

One can recognise an MPN domain in the interval 106–228 (KISSPKDVYT…YVSLKDEGFV (123 aa)). Residues H177, H179, and D190 each coordinate Zn(2+). Positions 177 to 190 (HNHPSGDPSPSRED) match the JAMM motif motif.

This sequence belongs to the UPF0758 family.

In Methanosarcina mazei (strain ATCC BAA-159 / DSM 3647 / Goe1 / Go1 / JCM 11833 / OCM 88) (Methanosarcina frisia), this protein is UPF0758 protein MM_2791.